The sequence spans 101 residues: Venom peptide Pc (101 aa).

An N-terminal signal peptide occupies residues M1–G20.

The protein belongs to the scorpion La1-like peptide family. Contains 4 disulfide bonds. In terms of tissue distribution, expressed by the venom gland.

The protein localises to the secreted. This Pandinus cavimanus (Tanzanian red clawed scorpion) protein is Venom peptide Pc.